The following is an 814-amino-acid chain: Testis-specific zinc finger protein topi (814 aa).

C2H2-type zinc fingers lie at residues 228 to 250 (NECT…MEKH), 275 to 297 (VKCN…GLIH), 360 to 382 (LQCE…SASH), 429 to 453 (FVCN…TSFH), 467 to 490 (LPCD…EEKH), 511 to 533 (YLCD…LRFH), 539 to 564 (FVCQ…RKCH), 570 to 592 (YLCL…RLIH), 598 to 620 (YECE…QRIH), and 626 to 649 (YSCL…RARH). The disordered stretch occupies residues 669–705 (TAAAQKAQSHNPEQQDNDVAGGASTSDVPSGSGFMST). Polar residues predominate over residues 691 to 705 (ASTSDVPSGSGFMST).

In terms of assembly, interacts with comr. In terms of tissue distribution, expressed in testis; primary spermatocytes.

It localises to the nucleus. In terms of biological role, required for male meiotic division and spermatid differentiation. Required for accumulation of aly and comr on chromatin. May function as a transcription factor. The polypeptide is Testis-specific zinc finger protein topi (topi) (Drosophila melanogaster (Fruit fly)).